We begin with the raw amino-acid sequence, 546 residues long: Aladin (546 aa).

An N-acetylcysteine modification is found at Cys-2. Ser-33 carries the phosphoserine modification. 7 WD repeats span residues 142 to 180 (EFAQ…VYNA), 183 to 222 (TIVP…IWTL), 234 to 274 (GCAQ…VWDV), 280 to 316 (VPLP…VWEA), 324 to 380 (WPTL…IVAD), 386 to 433 (IQTP…LFRT), and 442 to 482 (LPCG…IAHI). 4 positions are modified to phosphoserine: Ser-495, Ser-511, Ser-522, and Ser-525. Residues 500–546 (RAQEPPAGGGGSIHDLPLFTETSPTSAPWDPLPGPPPVLPHSPHSHL) are disordered. Over residues 529–539 (DPLPGPPPVLP) the composition is skewed to pro residues. Ser-541 carries the phosphoserine modification. The Microbody targeting signal motif lies at 544 to 546 (SHL).

As to quaternary structure, interacts with NDC1, the interaction is required for nuclear pore localization. Interacts with the inactive form aurora kinase AURKA. Interacts with PGRMC2. Widely expressed. Particularly abundant in cerebellum, corpus callosum, adrenal gland, pituitary gland, gastrointestinal structures and fetal lung.

The protein resides in the nucleus. It is found in the nuclear pore complex. The protein localises to the cytoplasm. It localises to the cytoskeleton. Its subcellular location is the spindle pole. The protein resides in the nucleus envelope. Plays a role in the normal development of the peripheral and central nervous system. Required for the correct localization of aurora kinase AURKA and the microtubule minus end-binding protein NUMA1 as well as a subset of AURKA targets which ensures proper spindle formation and timely chromosome alignment. The chain is Aladin (AAAS) from Homo sapiens (Human).